Consider the following 309-residue polypeptide: Aspartate carbamoyltransferase catalytic subunit (309 aa).

Arg-55 and Thr-56 together coordinate carbamoyl phosphate. An L-aspartate-binding site is contributed by Lys-85. Carbamoyl phosphate is bound by residues Arg-106, His-135, and Gln-138. The L-aspartate site is built by Arg-168 and Arg-230. Carbamoyl phosphate-binding residues include Leu-268 and Pro-269.

This sequence belongs to the aspartate/ornithine carbamoyltransferase superfamily. ATCase family. Heterododecamer (2C3:3R2) of six catalytic PyrB chains organized as two trimers (C3), and six regulatory PyrI chains organized as three dimers (R2).

The enzyme catalyses carbamoyl phosphate + L-aspartate = N-carbamoyl-L-aspartate + phosphate + H(+). It functions in the pathway pyrimidine metabolism; UMP biosynthesis via de novo pathway; (S)-dihydroorotate from bicarbonate: step 2/3. In terms of biological role, catalyzes the condensation of carbamoyl phosphate and aspartate to form carbamoyl aspartate and inorganic phosphate, the committed step in the de novo pyrimidine nucleotide biosynthesis pathway. The polypeptide is Aspartate carbamoyltransferase catalytic subunit (Aliivibrio salmonicida (strain LFI1238) (Vibrio salmonicida (strain LFI1238))).